Consider the following 156-residue polypeptide: uncharacterized protein (156 aa).

This is an uncharacterized protein from Staphylococcus aureus (strain MW2).